We begin with the raw amino-acid sequence, 358 residues long: Alanine racemase (358 aa).

The active-site Proton acceptor; specific for D-alanine is lysine 35. N6-(pyridoxal phosphate)lysine is present on lysine 35. Arginine 130 serves as a coordination point for substrate. Residue tyrosine 255 is the Proton acceptor; specific for L-alanine of the active site. Methionine 303 provides a ligand contact to substrate.

This sequence belongs to the alanine racemase family. Requires pyridoxal 5'-phosphate as cofactor.

It carries out the reaction L-alanine = D-alanine. It participates in amino-acid biosynthesis; D-alanine biosynthesis; D-alanine from L-alanine: step 1/1. Its function is as follows. Catalyzes the interconversion of L-alanine and D-alanine. May also act on other amino acids. This Shewanella sediminis (strain HAW-EB3) protein is Alanine racemase (alr).